The chain runs to 46 residues: uncharacterized protein (46 aa).

A disordered region spans residues M1–P46. The span at F25–G40 shows a compositional bias: polar residues.

This is an uncharacterized protein from Dictyostelium discoideum (Social amoeba).